Consider the following 3302-residue polypeptide: Xin actin-binding repeat-containing protein 2 (3302 aa).

Residues 166-204 (NDSEETLKPSSAMGTSSYTSARQSKETSTSSYSNHSLTS) form a disordered region. Residues 173 to 187 (KPSSAMGTSSYTSAR) are compositionally biased toward polar residues. Low complexity predominate over residues 191–204 (ETSTSSYSNHSLTS). 7 Xin repeats span residues 306–321 (AGVQ…TNDS), 341–356 (GEVQ…QPLD), 381–396 (GDVK…QPID), 418–433 (GDVC…RPLD), 456–471 (GDVK…QQLD), 496–511 (GNVK…QPLY), and 534–549 (GDVR…QPLD). S565 is modified (phosphoserine). 2 Xin repeats span residues 572 to 587 (GEVG…QPLE) and 606 to 621 (IDVS…QPLD). S633 carries the post-translational modification Phosphoserine. Xin repeat units lie at residues 640–655 (GDVK…LPIE), 677–692 (GDVK…QRLE), 713–728 (GHVK…NNLI), 744–759 (GTVE…TPLY), and 782–797 (GDVR…RPID). The residue at position 813 (S813) is a Phosphoserine. Xin repeat units follow at residues 820 to 835 (GNVK…QPLD), 859 to 874 (GDVK…QPME), 892 to 907 (GDVR…QPLD), 930 to 945 (GDVR…ENLD), 965 to 980 (GDVS…QSLD), 1004 to 1019 (GNVL…QPID), 1040 to 1055 (GDVR…FSLD), 1077 to 1092 (GDVK…QPLY), 1115 to 1130 (GDVR…KPLD), 1152 to 1167 (GDVS…QPLD), and 1186 to 1201 (GNVQ…EGGD). S1210 carries the post-translational modification Phosphoserine. Xin repeat units lie at residues 1217–1232 (GNVK…HSID), 1254–1269 (GDVK…QTLD), and 1289–1304 (SDVK…TPIH). S1573 is modified (phosphoserine). Disordered stretches follow at residues 1848–1882 (VSAS…VDKT), 1920–1939 (AETQ…NPAG), 1957–2002 (EKQN…APDK), 2039–2296 (YPDC…KPYM), 2311–2378 (RQQR…SKAV), 2546–2593 (YAAK…ESRV), and 2626–2687 (NFQQ…RESQ). Residues 1859–1873 (KTKESENVRESKDDV) are compositionally biased toward basic and acidic residues. A Phosphothreonine modification is found at T1930. Position 1935 is a phosphoserine (S1935). Residues 1957 to 1969 (EKQNSNKDMRKND) show a composition bias toward basic and acidic residues. Pro residues-rich tracts occupy residues 2051–2062 (LPPPSPPPPPPS) and 2125–2134 (SLPPPPPTAP). A compositionally biased stretch (low complexity) spans 2135–2145 (SQPAHLLSSSV). S2158 is subject to Phosphoserine. The segment covering 2158–2167 (SRKETLDSHQ) has biased composition (basic and acidic residues). Positions 2181–2186 (PPTLPK) are interacts with NEBL. Phosphoserine is present on residues S2198, S2211, and S2252. A compositionally biased stretch (basic and acidic residues) spans 2205–2243 (ELERSLSDVEIKTTLSKDQKSSLVAESREHTEAKQEVFR). 2 stretches are compositionally biased toward polar residues: residues 2251-2263 (LSIS…SQTV) and 2282-2292 (SFPSGSEQQSP). Residues 2303-2328 (LMIAEEKYRQQREELEKQRRESSCHS) are a coiled coil. 2 stretches are compositionally biased toward basic and acidic residues: residues 2311–2325 (RQQR…RESS) and 2333–2350 (ETQH…ELQK). Positions 2626–2635 (NFQQTQTQTS) are enriched in polar residues. Over residues 2636-2659 (RIEHKELSQPYSEKKCLRDKDKQQ) the composition is skewed to basic and acidic residues. Residues 2674 to 2685 (TQKQSSFSSVRE) show a composition bias toward polar residues. Coiled coils occupy residues 2696–2724 (NILE…SNKS) and 2751–2777 (RVAM…EMLV). The segment at 2835–2934 (RQVATHSEAA…PSPPRSRSEQ (100 aa)) is disordered. Polar residues-rich tracts occupy residues 2836–2850 (QVAT…NPAK) and 2891–2903 (KSEL…NNSC). Residues 2907–2916 (LPRRPMEHTS) are compositionally biased toward basic and acidic residues. Phosphoserine occurs at positions 2987 and 3225. The segment at 3278–3302 (QGNLHNLSKDGLSNGVPRSRPAEFS) is disordered.

Belongs to the Xin family. Interacts with ACTN2. Interacts with F-actin. Interacts with NEBL (via SH3 domain). Interacts with Kcna5/Kv1.5 and Scn5a/Nav1.5; the interactions are required for normal action potential configuration in the heart.

The protein resides in the cell junction. Protects actin filaments from depolymerization. Required for correct morphology of cell membranes and maturation of intercalated disks of cardiomyocytes via facilitating localization of XIRP1 and CDH2 to the termini of aligned mature cardiomyocytes. Thereby required for correct postnatal heart development and growth regulation that is crucial for overall heart morphology and diastolic function. Required for normal electrical conduction in the heart including formation of the infranodal ventricular conduction system and normal action potential configuration, as a result of its interaction with the cardiac ion channel components Scn5a/Nav1.5 and Kcna5/Kv1.5. Required for regular actin filament spacing of the paracrystalline array in both inner and outer hair cells of the cochlea, thereby required for maintenance of stereocilia morphology. This chain is Xin actin-binding repeat-containing protein 2, found in Rattus norvegicus (Rat).